The primary structure comprises 352 residues: Protein RecA (352 aa).

An ATP-binding site is contributed by Gly67–Thr74. Residues Val332–Phe352 are disordered. Residues Ala335–Phe352 are compositionally biased toward basic and acidic residues.

Belongs to the RecA family.

It localises to the cytoplasm. Its function is as follows. Can catalyze the hydrolysis of ATP in the presence of single-stranded DNA, the ATP-dependent uptake of single-stranded DNA by duplex DNA, and the ATP-dependent hybridization of homologous single-stranded DNAs. It interacts with LexA causing its activation and leading to its autocatalytic cleavage. The protein is Protein RecA of Pseudarthrobacter chlorophenolicus (strain ATCC 700700 / DSM 12829 / CIP 107037 / JCM 12360 / KCTC 9906 / NCIMB 13794 / A6) (Arthrobacter chlorophenolicus).